We begin with the raw amino-acid sequence, 470 residues long: Hydroxymethylglutaryl-CoA synthase (470 aa).

The active-site Proton donor/acceptor is Glu100. Catalysis depends on Cys134, which acts as the Acyl-thioester intermediate. 7 residues coordinate (3S)-3-hydroxy-3-methylglutaryl-CoA: Cys134, Thr176, Ser225, His269, Lys278, Asn348, and Ser382. His269 (proton donor/acceptor) is an active-site residue.

The protein belongs to the thiolase-like superfamily. HMG-CoA synthase family.

It catalyses the reaction acetoacetyl-CoA + acetyl-CoA + H2O = (3S)-3-hydroxy-3-methylglutaryl-CoA + CoA + H(+). The protein operates within metabolic intermediate biosynthesis; (R)-mevalonate biosynthesis; (R)-mevalonate from acetyl-CoA: step 2/3. Its function is as follows. Hydroxymethylglutaryl-CoA synthase; part of the first module of ergosterol biosynthesis pathway that includes the early steps of the pathway, conserved across all eukaryotes, and which results in the formation of mevalonate from acetyl-coenzyme A (acetyl-CoA). This module also plays a key role in the biosynthesis of triterpenes such as ganoderic acids (GA), a group of highly oxygenated lanostane-type triterpenoids which are well recognized as a main group of unique bioactive compounds in the medicinal mushroom Ganoderma lucidum. In this module, the acetyl-CoA acetyltransferase catalyzes the formation of acetoacetyl-CoA. The hydroxymethylglutaryl-CoA synthase HMGS then condenses acetyl-CoA with acetoacetyl-CoA to form HMG-CoA. The rate-limiting step of the early module is the reduction to mevalonate by the 3-hydroxy-3-methylglutaryl-coenzyme A (HMG-CoA) reductase. The polypeptide is Hydroxymethylglutaryl-CoA synthase (Ganoderma lucidum (Ling zhi medicinal fungus)).